The primary structure comprises 361 residues: Tyrosine--tRNA ligase (361 aa).

5 residues coordinate L-tyrosine: Tyr-36, Tyr-162, Gln-166, Asp-169, and Gln-184. The 'KMSKS' region motif lies at 235-239 (KMSKS). Residue Lys-238 coordinates ATP.

The protein belongs to the class-I aminoacyl-tRNA synthetase family. TyrS type 4 subfamily. As to quaternary structure, homodimer.

It localises to the cytoplasm. It carries out the reaction tRNA(Tyr) + L-tyrosine + ATP = L-tyrosyl-tRNA(Tyr) + AMP + diphosphate + H(+). In terms of biological role, catalyzes the attachment of tyrosine to tRNA(Tyr) in a two-step reaction: tyrosine is first activated by ATP to form Tyr-AMP and then transferred to the acceptor end of tRNA(Tyr). This Sulfolobus acidocaldarius (strain ATCC 33909 / DSM 639 / JCM 8929 / NBRC 15157 / NCIMB 11770) protein is Tyrosine--tRNA ligase.